Here is a 479-residue protein sequence, read N- to C-terminus: Bifunctional aspartate aminotransferase and glutamate/aspartate-prephenate aminotransferase (479 aa).

A chloroplast-targeting transit peptide spans 1–79; sequence MAATTTTSSS…VEVDISLSPR (79 aa). Glycine 111 is a binding site for L-aspartate. 172–173 provides a ligand contact to pyridoxal 5'-phosphate; sequence AK. 2 residues coordinate L-aspartate: tryptophan 197 and asparagine 247. Residues asparagine 247, tyrosine 279, and 307–309 contribute to the pyridoxal 5'-phosphate site; that span reads GFS. An N6-(pyridoxal phosphate)lysine modification is found at lysine 310. Residue arginine 318 coordinates pyridoxal 5'-phosphate. Arginine 449 serves as a coordination point for L-aspartate.

It belongs to the class-I pyridoxal-phosphate-dependent aminotransferase family. Homodimer. The cofactor is pyridoxal 5'-phosphate. In terms of tissue distribution, expressed in flowers, pistils, stamens, ovaries and at lower levels in leaves and sepals.

The protein resides in the plastid. The protein localises to the chloroplast. The enzyme catalyses L-aspartate + 2-oxoglutarate = oxaloacetate + L-glutamate. It catalyses the reaction L-arogenate + oxaloacetate = prephenate + L-aspartate. It carries out the reaction L-arogenate + 2-oxoglutarate = prephenate + L-glutamate. It participates in amino-acid biosynthesis; L-phenylalanine biosynthesis; L-arogenate from prephenate (L-Asp route): step 1/1. Its pathway is amino-acid biosynthesis; L-phenylalanine biosynthesis; L-arogenate from prephenate (L-Glu route): step 1/1. In terms of biological role, prokaryotic-type aspartate aminotransferase. Also has a prenate transaminase activity. Involved in the aromatic amino acids biosynthesis pathway via the arogenate route. Required for the transamination of prephenate into arogenate. Can use 2-oxoglutarate, oxaloacetate and prephenate as substrates, but not phenylpyruvate or 4-hydroxyphenylpyruvate. In Petunia hybrida (Petunia), this protein is Bifunctional aspartate aminotransferase and glutamate/aspartate-prephenate aminotransferase.